A 405-amino-acid polypeptide reads, in one-letter code: Serine/threonine transporter SstT (405 aa).

9 helical membrane passes run 13–33, 43–63, 81–101, 140–160, 191–211, 215–235, 297–317, 338–358, and 362–382; these read GNLV…ATFS, IGNL…FILV, IVVL…ILSF, ALMN…GLAL, FGIF…ALAG, LLAV…PMIV, MAGA…TMGI, ASGV…LFGI, and IAMQ…SAET.

It belongs to the dicarboxylate/amino acid:cation symporter (DAACS) (TC 2.A.23) family.

It is found in the cell inner membrane. It carries out the reaction L-serine(in) + Na(+)(in) = L-serine(out) + Na(+)(out). It catalyses the reaction L-threonine(in) + Na(+)(in) = L-threonine(out) + Na(+)(out). Functionally, involved in the import of serine and threonine into the cell, with the concomitant import of sodium (symport system). The chain is Serine/threonine transporter SstT from Vibrio cholerae serotype O1 (strain ATCC 39315 / El Tor Inaba N16961).